Consider the following 240-residue polypeptide: Transcriptional regulatory protein rxt2 (240 aa).

It belongs to the RXT2 family. As to quaternary structure, component of the RPD3C(L) complex.

The protein resides in the nucleus. Functionally, component of the RPD3C(L) histone deacetylase complex (HDAC) responsible for the deacetylation of lysine residues on the N-terminal part of the core histones (H2A, H2B, H3 and H4). Histone deacetylation gives a tag for epigenetic repression and plays an important role in transcriptional regulation, cell cycle progression and developmental events. The protein is Transcriptional regulatory protein rxt2 (rtx2) of Schizosaccharomyces pombe (strain 972 / ATCC 24843) (Fission yeast).